The chain runs to 240 residues: Small ribosomal subunit protein uS3 (240 aa).

The 72-residue stretch at 21–92 (LNEFFTRELA…TIVLYAERVQ (72 aa)) folds into the KH type-2 domain. Phosphothreonine is present on residues Thr44 and Thr70. Phosphoserine is present on Ser97. Residue Lys106 forms a Glycyl lysine isopeptide (Lys-Gly) (interchain with G-Cter in ubiquitin) linkage. Ser129 is subject to Phosphoserine. Residues Lys132 and Lys141 each participate in a glycyl lysine isopeptide (Lys-Gly) (interchain with G-Cter in ubiquitin) cross-link. Position 146 is an omega-N-methylarginine; by SFM1 (Arg146). Glycyl lysine isopeptide (Lys-Gly) (interchain with G-Cter in ubiquitin) cross-links involve residues Lys151, Lys200, and Lys212. Residues 212–240 (KEEEPILAPSVKDYRPAEETEAQAEPVEA) form a disordered region. A Phosphoserine modification is found at Ser221. A compositionally biased stretch (acidic residues) spans 230–240 (ETEAQAEPVEA). At Thr231 the chain carries Phosphothreonine.

Belongs to the universal ribosomal protein uS3 family. Component of the small ribosomal subunit (SSU). Mature yeast ribosomes consist of a small (40S) and a large (60S) subunit. The 40S small subunit contains 1 molecule of ribosomal RNA (18S rRNA) and 33 different proteins (encoded by 57 genes). The large 60S subunit contains 3 rRNA molecules (25S, 5.8S and 5S rRNA) and 46 different proteins (encoded by 81 genes). Ubiquitinated at Lys-212 in response to stalled ribosomes. Ubiquitination leads to activation of the No-Go Decay (NGD) pathway and degradation of non-functional 18S rRNA: first monoubiquitinated at Lys-212 by MAG2, followed by formation of 'Lys-63'-linked polyubiquitin chains on monoubiquitin by HEL2 and RSP5.

It localises to the cytoplasm. In terms of biological role, component of the ribosome, a large ribonucleoprotein complex responsible for the synthesis of proteins in the cell. The small ribosomal subunit (SSU) binds messenger RNAs (mRNAs) and translates the encoded message by selecting cognate aminoacyl-transfer RNA (tRNA) molecules. The large subunit (LSU) contains the ribosomal catalytic site termed the peptidyl transferase center (PTC), which catalyzes the formation of peptide bonds, thereby polymerizing the amino acids delivered by tRNAs into a polypeptide chain. The nascent polypeptides leave the ribosome through a tunnel in the LSU and interact with protein factors that function in enzymatic processing, targeting, and the membrane insertion of nascent chains at the exit of the ribosomal tunnel. This is Small ribosomal subunit protein uS3 from Saccharomyces cerevisiae (strain ATCC 204508 / S288c) (Baker's yeast).